Here is a 266-residue protein sequence, read N- to C-terminus: UPF0294 protein YafD (266 aa).

It belongs to the UPF0294 family.

The protein localises to the cytoplasm. The polypeptide is UPF0294 protein YafD (Salmonella agona (strain SL483)).